Consider the following 506-residue polypeptide: Cationic amino acid transporter 8 (506 aa).

Residues N2 and N5 are each glycosylated (N-linked (GlcNAc...) asparagine). Residues 38–58 (FYLLLIIIIYTATSACIYFDW) traverse the membrane as a helical segment. Residue N75 is glycosylated (N-linked (GlcNAc...) asparagine). 5 helical membrane passes run 93 to 113 (NLYP…GFLY), 116 to 136 (IGPK…WIFL), 147 to 167 (LIGF…ILTV), 174 to 194 (ISTF…AVPA), and 211 to 231 (ICYG…TFLL). N-linked (GlcNAc...) asparagine glycosylation occurs at N277. A helical transmembrane segment spans residues 302–322 (ILLFFKVLLSYPSICIIVYFI). N-linked (GlcNAc...) asparagine glycosylation is found at N325 and N342. Helical transmembrane passes span 344–364 (SIIN…IIFG), 372–392 (AAII…TALI), 399–419 (LISA…IYCF), and 427–447 (VVFG…SLFC). 2 N-linked (GlcNAc...) asparagine glycosylation sites follow: N453 and N456. The chain crosses the membrane as a helical span at residues 466–486 (TISILLAISFIIMFLPLSILY).

This sequence belongs to the SLC43A transporter (TC 2.A.1.44) family.

The protein resides in the cell membrane. In terms of biological role, cationic amino acid transporter which transports L-arginine, L-lysine and, to a lesser extent, L-histidine and ornithine. Plays an essential role in gametogenesis. The polypeptide is Cationic amino acid transporter 8 (Plasmodium berghei (strain Anka)).